The sequence spans 201 residues: Proteasome subunit beta 1 (201 aa).

Position 1 (Met-1) is a propeptide, removed in mature form; by autocatalysis. Thr-2 acts as the Nucleophile in catalysis.

Belongs to the peptidase T1B family. As to quaternary structure, the 20S proteasome core is composed of 14 alpha and 14 beta subunits that assemble into four stacked heptameric rings, resulting in a barrel-shaped structure. The two inner rings, each composed of seven catalytic beta subunits, are sandwiched by two outer rings, each composed of seven alpha subunits. The catalytic chamber with the active sites is on the inside of the barrel. Has a gated structure, the ends of the cylinder being occluded by the N-termini of the alpha-subunits. Is capped at one or both ends by the proteasome regulatory ATPase, PAN.

It is found in the cytoplasm. The catalysed reaction is Cleavage of peptide bonds with very broad specificity.. The formation of the proteasomal ATPase PAN-20S proteasome complex, via the docking of the C-termini of PAN into the intersubunit pockets in the alpha-rings, triggers opening of the gate for substrate entry. Interconversion between the open-gate and close-gate conformations leads to a dynamic regulation of the 20S proteasome proteolysis activity. Component of the proteasome core, a large protease complex with broad specificity involved in protein degradation. The sequence is that of Proteasome subunit beta 1 from Pyrobaculum calidifontis (strain DSM 21063 / JCM 11548 / VA1).